A 178-amino-acid chain; its full sequence is MGIEYRSLHTSQLTLSEKEALYDLLIEGFEGDFSHDDFAHTLGGMHVMAFDQQKLVGHVAIIQRHMALDNTPISVGYVEAMVVEQSYRRQGIGRQLMLQTNKIIASCYQLGLLSASDDGQKLYHSVGWQIWKGKLFELKQGSYIRSIEEEGGVMGWKADGEVDFTASLYCDFRGGDQW.

Residues 8–171 (LHTSQLTLSE…VDFTASLYCD (164 aa)) enclose the N-acetyltransferase domain. Residues D32 and 79 to 80 (EA) contribute to the substrate site. Residues 81-83 (MVV) and 88-93 (RRQGIG) contribute to the CoA site. Substrate-binding positions include S114 and 148–149 (EE).

Belongs to the AAC(2')-I acetyltransferase family. In terms of assembly, homodimer.

It carries out the reaction gentamicin C1a + acetyl-CoA = N(2')-acetylgentamicin C1a + CoA + H(+). Functionally, catalyzes the coenzyme A-dependent acetylation of the 2' hydroxyl or amino group of a broad spectrum of aminoglycosides. It confers resistance to aminoglycosides. This is Aminoglycoside 2'-N-acetyltransferase (aac) from Providencia stuartii.